We begin with the raw amino-acid sequence, 154 residues long: Histidine-containing phosphotransfer protein 1 (154 aa).

Met1 is subject to N-acetylmethionine. Residues 38–143 enclose the HPt domain; that stretch reads NPDFVSQVVT…FKLEQQIVAS (106 aa). His79 bears the Phosphohistidine mark.

As to quaternary structure, interacts with the B-type response regulators ARR1, ARR2, ARR4 and ARR9. Binds to ETR1, AHK2, AHK3, AHK4, AHK5 and FBR12. Post-translationally, two-component system major event consists of a His-to-Asp phosphorelay between a sensor histidine kinase (HK) and a response regulator (RR). In plants, the His-to-Asp phosphorelay involves an additional intermediate named Histidine-containing phosphotransfer protein (HPt). This multistep phosphorelay consists of a His-Asp-His-Asp sequential transfer of a phosphate group between first a His and an Asp of the HK protein, followed by the transfer to a conserved His of the HPt protein and finally the transfer to an Asp in the receiver domain of the RR protein. In terms of tissue distribution, strongly expressed in roots.

It is found in the cytoplasm. It localises to the cytosol. The protein resides in the nucleus. In terms of biological role, functions as a two-component phosphorelay mediators between cytokinin sensor histidine kinases and response regulator (B-type ARRs). Plays an important role in propagating cytokinin signal transduction through the multistep His-to-Asp phosphorelay. The protein is Histidine-containing phosphotransfer protein 1 (AHP1) of Arabidopsis thaliana (Mouse-ear cress).